Here is a 350-residue protein sequence, read N- to C-terminus: Proton-activated chloride channel (350 aa).

The tract at residues 1-51 (MEAIRKELSRSYQELNDETDPIARDPEGAQEEEQEEAASAVVPDRDSDRSN) is disordered. At 1-63 (MEAIRKELSR…VHFSRTCLKN (63 aa)) the chain is on the cytoplasmic side. The chain crosses the membrane as a helical span at residues 64 to 84 (VFSVLLIFVYLLLMGVAVFLV). Residues 85–297 (YQTITDFRDK…KDPYIQEIQD (213 aa)) lie on the Extracellular side of the membrane. The helical transmembrane segment at 298 to 318 (IITANPWSMIALLCSVFLVLF) threads the bilayer. The Cytoplasmic segment spans residues 319-350 (KAADFAKLSVKWMIKVRRRHLKKRTRELNHIS).

Belongs to the proton-activated chloride channel family.

It is found in the cell membrane. It catalyses the reaction chloride(in) = chloride(out). Its function is as follows. Chloride channel gated by pH that facilitates the entry of chloride ions into cells upon exposure to extracellular acidic pH. The sequence is that of Proton-activated chloride channel from Xenopus laevis (African clawed frog).